Here is a 274-residue protein sequence, read N- to C-terminus: Large ribosomal subunit protein uL2 (274 aa).

A disordered region spans residues 225–274; it reads MNPVDHPHGGGEGRSPIGRHPVTPWGKPTLGVKTRKKNKASSKLIIKRRK. Over residues 257-274 the composition is skewed to basic residues; sequence KTRKKNKASSKLIIKRRK.

Belongs to the universal ribosomal protein uL2 family. Part of the 50S ribosomal subunit. Forms a bridge to the 30S subunit in the 70S ribosome.

One of the primary rRNA binding proteins. Required for association of the 30S and 50S subunits to form the 70S ribosome, for tRNA binding and peptide bond formation. It has been suggested to have peptidyltransferase activity; this is somewhat controversial. Makes several contacts with the 16S rRNA in the 70S ribosome. The polypeptide is Large ribosomal subunit protein uL2 (Carboxydothermus hydrogenoformans (strain ATCC BAA-161 / DSM 6008 / Z-2901)).